Here is an 89-residue protein sequence, read N- to C-terminus: Small ribosomal subunit protein uS14 (89 aa).

It belongs to the universal ribosomal protein uS14 family. In terms of assembly, part of the 30S ribosomal subunit. Contacts proteins S3 and S10.

In terms of biological role, binds 16S rRNA, required for the assembly of 30S particles and may also be responsible for determining the conformation of the 16S rRNA at the A site. This Onion yellows phytoplasma (strain OY-M) protein is Small ribosomal subunit protein uS14.